Reading from the N-terminus, the 1364-residue chain is Kinectin (1364 aa).

Residues 1-6 (MEFYES) lie on the Cytoplasmic side of the membrane. Residues 7 to 29 (TYFIILIPSVVITVIFLFFWLFM) traverse the membrane as a helical; Signal-anchor for type II membrane protein segment. Residues 30–1364 (KETLYDEVLA…KGREHYQLVE (1335 aa)) are Lumenal-facing. 4 stretches are compositionally biased toward basic and acidic residues: residues 46–56 (KFPPTKSDKKK), 73–86 (HESD…DFKL), 121–135 (QKAA…ESEG), and 170–179 (QKNDDQDTKT). Residues 46 to 207 (KFPPTKSDKK…VKQENVSGKK (162 aa)) form a disordered region. N-linked (GlcNAc...) asparagine glycosylation is found at Asn202, Asn267, Asn623, Asn638, Asn704, Asn775, Asn976, Asn1061, Asn1088, and Asn1094. Residues 315–1085 (KASKAESAAA…VETRELLQKL (771 aa)) adopt a coiled-coil conformation. The stretch at 1116-1306 (SGSEDIKVME…ASLEREIGKV (191 aa)) forms a coiled coil.

The protein belongs to the kinectin family. As to quaternary structure, parallel homodimers formed between the membrane-bound and the cytosolic form, and also between 2 cytosolic forms. Post-translationally, both the membrane and cytoplasmic forms seem to be myristoylated.

It localises to the endoplasmic reticulum membrane. In terms of biological role, receptor for kinesin thus involved in kinesin-driven vesicle motility. This chain is Kinectin (KTN1), found in Gallus gallus (Chicken).